The primary structure comprises 504 residues: Carnosic acid synthase (504 aa).

Residues 4–24 (FIILSLAFIAAWVVYSRWSEY) traverse the membrane as a helical segment. Heme is bound at residue cysteine 447.

Belongs to the cytochrome P450 family. Heme is required as a cofactor. Expressed in glandular trichomes of young leaves.

Its subcellular location is the membrane. It carries out the reaction 11-hydroxyferruginol + 3 reduced [NADPH--hemoprotein reductase] + 3 O2 = carnosate + 3 oxidized [NADPH--hemoprotein reductase] + 4 H2O + 4 H(+). The catalysed reaction is miltiradiene + 2 reduced [NADPH--hemoprotein reductase] + 2 O2 = miltiradien-20-al + 2 oxidized [NADPH--hemoprotein reductase] + 3 H2O + 2 H(+). It catalyses the reaction ferruginol + 3 reduced [NADPH--hemoprotein reductase] + 3 O2 = pisiferate + 3 oxidized [NADPH--hemoprotein reductase] + 4 H2O + 4 H(+). Its pathway is secondary metabolite biosynthesis; terpenoid biosynthesis. Functionally, monooxygenase involved in the biosynthesis of carnosate, a potent antioxidant labdane-related diterpene natural products. Catalyzes the oxidation of 11-hydroxyferruginol to produce carnosate. Mediates the conversion of miltiradien into miltiradien-20-al. Also involved in the production of pisiferic acid and derivative products from ferruginol. The protein is Carnosic acid synthase of Rosmarinus officinalis (Rosemary).